Here is a 580-residue protein sequence, read N- to C-terminus: MTPDIQAPFLSLLLLFPVLTVANVPTLTTSDSINPRRTTPVSTTQSSPTSSPTKETSWSTTTTLLTASSPAPSPAASPGHDGASTPTSSPAPSPAASPGHDGASTPTSSPAPSPAASPGHDGASTPTSSPAPSPAASPGHDGASTPTSSPAPSPAASPGHNGTSSPTGSPAPSPAASPGHDGASTPTSSPAPSPAASPGHNGTSSPTGSPAPSPAASPGHDGASTPTSSPAPSPAASPGHNGTSSPTGSPAPSPTASPGHDSAPSLTSSPAPSPTASPGQHGASSPTSSDTSSMTTRSMSSSMVTSAHKGTSSRATMTPVSKGTPSSVPSSETAPTAASHITRTAASSPSIALSTSSNPKTSQQLSVRVSLYFLSFRITNLQFNSSLENPQTSYYQELQRSIWGLILQIYKQRDFLGLSEIKFRPGSVVVELTLAFREGTTAEWVKAQFSQLEAHAASYNLTISGVSVYSAPFPSSAQAGSGVPGWGIALLVLVCVLVALAIIYLIALVVCQCGRKKCEQLDVFPTLDAYHPMSEYSTYHTHGRYVPPGSTKRSPYEEVSAGNGGSNLSYTNLAATSANL.

The signal sequence occupies residues 1–22 (MTPDIQAPFLSLLLLFPVLTVA). The Extracellular portion of the chain corresponds to 23–489 (NVPTLTTSDS…GSGVPGWGIA (467 aa)). Over residues 28-37 (TTSDSINPRR) the composition is skewed to polar residues. The segment at 28–359 (TTSDSINPRR…SIALSTSSNP (332 aa)) is disordered. Low complexity predominate over residues 38–88 (TTPVSTTQSSPTSSPTKETSWSTTTTLLTASSPAPSPAASPGHDGASTPTS). 11 repeat units span residues 70-89 (PAPS…PTSS), 90-109 (PAPS…PTSS), 110-129 (PAPS…PTSS), 130-149 (PAPS…PTSS), 150-169 (PAPS…PTGS), 170-189 (PAPS…PTSS), 190-209 (PAPS…PTGS), 210-229 (PAPS…PTSS), 230-249 (PAPS…PTGS), 250-269 (PAPS…LTSS), and 270-289 (PAPS…PTSS). The interval 70–289 (PAPSPAASPG…QHGASSPTSS (220 aa)) is 11 X 20 AA approximate tandem repeats of P-A-P-S-P-A-A-S-P-G-H-D-G-A-S-T-P-T-S-S. S73, S77, and S84 each carry an O-linked (GalNAc...) serine glycan. 2 O-linked (GalNAc...) threonine glycosylation sites follow: T85 and T87. Residues S88 and S89 are each glycosylated (O-linked (GalNAc...) serine). Composition is skewed to low complexity over residues 96–108 (ASPG…TPTS), 116–128 (ASPG…TPTS), 136–148 (ASPG…TPTS), 156–168 (ASPG…SPTG), 176–188 (ASPG…TPTS), 196–208 (ASPG…SPTG), 216–228 (ASPG…TPTS), 236–248 (ASPG…SPTG), and 256–306 (ASPG…MVTS). N-linked (GlcNAc...) asparagine glycosylation occurs at N161. The N-linked (GlcNAc...) asparagine glycan is linked to N201. N241 carries N-linked (GlcNAc...) asparagine glycosylation. Over residues 308 to 344 (HKGTSSRATMTPVSKGTPSSVPSSETAPTAASHITRT) the composition is skewed to polar residues. Positions 345–357 (AASSPSIALSTSS) are enriched in low complexity. In terms of domain architecture, SEA spans 368–475 (RVSLYFLSFR…VSVYSAPFPS (108 aa)). Residues N384 and N460 are each glycosylated (N-linked (GlcNAc...) asparagine). The chain crosses the membrane as a helical span at residues 490 to 510 (LLVLVCVLVALAIIYLIALVV). Residues C511 and C513 are each lipidated (S-palmitoyl cysteine). Over 511-580 (CQCGRKKCEQ…TNLAATSANL (70 aa)) the chain is Cytoplasmic. Residues 519 to 555 (EQLDVFPTLDAYHPMSEYSTYHTHGRYVPPGSTKRSP) form an interaction with P53 region. At Y530 the chain carries Phosphotyrosine; by PDGFR. The Interaction with GRB2 motif lies at 530-533 (YHPM). Residue Y539 is modified to Phosphotyrosine. A disordered region spans residues 544-563 (RYVPPGSTKRSPYEEVSAGN). Y545 is subject to Phosphotyrosine; by PDGFR. The tract at residues 550 to 557 (STKRSPYE) is required for interaction with GSK3B. At T551 the chain carries Phosphothreonine; by PKC/PRKCD. A Phosphoserine; by GSK3-beta modification is found at S554. At Y556 the chain carries Phosphotyrosine; by CSK, EGFR and SRC. Positions 556 to 559 (YEEV) match the Interaction with SRC and ESR1 motif. The interval 560–568 (SAGNGGSNL) is required for interaction with beta- and gamma-catenins. The residue at position 570 (Y570) is a Phosphotyrosine. The Required for interaction with AP1S2 signature appears at 570-572 (YTN).

The alpha subunit forms a tight, non-covalent heterodimeric complex with the proteolytically-released beta subunit. Binds directly the SH2 domain of GRB2, and forms a MUC1/GRB2/SOS1 complex involved in RAS signaling. The cytoplasmic tail (MUC1CT) interacts with several proteins such as, SRC, CTNNB1 and ERBs. Interaction with the SH2 domain of CSK decreases interaction with GSK3B. Interacts with CTNNB1/beta-catenin and JUP/gamma-catenin and promotes cell adhesion. Interaction with JUP/gamma-catenin is induced by heregulin. Binds PRKCD, ERBB2, ERBB3 and ERBB4. Heregulin (HRG) stimulates the interaction with ERBB2 and, to a much lesser extent, the interaction with ERBB3 and ERBB4. Interacts with P53 in response to DNA damage. Interacts with KLF4. Interacts with estrogen receptor alpha/ESR1, through its DNA-binding domain, and stimulates its transcription activity. Binds ADAM17. Post-translationally, highly glycosylated (N- and O-linked carbohydrates and sialic acid). O-linked glycosylation consists mainly of GalNAc, galactose, and sialic acid. The ratio from pools of milk from different dairy breeds is GalNAc: GlcNAc:galactose:mannose:sialic acid is 14:1:10:1:15. Proteolytic cleavage in the SEA domain occurs in the endoplasmic reticulum by an autoproteolytic mechanism and requires the full-length SEA domain as well as requiring a Ser, Thr or Cys residue at the P + 1 site. Ectodomain shedding is mediated by ADAM17 in uterine epithelial cells. In terms of processing, dual palmitoylation on cysteine residues in the CQC motif is required for recycling from endosomes back to the plasma membrane. Post-translationally, phosphorylated on tyrosines and serine residues in the C-terminal. Phosphorylation on tyrosines in the C-terminal increases the nuclear location of MUC1 and beta-catenin. Phosphorylation by PKC delta induces binding of MUC1 to beta-catenin/CTNNB1 and thus decreases the formation of the beta-catenin/E-cadherin complex. Src-mediated phosphorylation inhibits interaction with GSK3B. Csk- or Src- or EGFR-mediated phosphorylation on Tyr-556 increases binding to beta-catenin/CTNNB1. GSK3B-mediated phosphorylation on Ser-554 decreases this interaction but restores the formation of the beta-cadherin/E-cadherin complex. On T-cell receptor activation, phosphorylated by LCK. PDGFR-mediated phosphorylation increases nuclear colocalization of MUC1CT and CTNNB1. In terms of tissue distribution, expressed on the apical surface of epithelia cells, and on the milk fat globule membrane (MGGM).

It is found in the apical cell membrane. Its subcellular location is the cell membrane. It localises to the cytoplasm. The protein resides in the nucleus. In terms of biological role, the alpha subunit has cell adhesive properties. May provide a protective layer on epithelial cells against bacterial and enzyme attack. Functionally, the beta subunit contains a C-terminal domain which is involved in cell signaling, through phosphorylations and protein-protein interactions. Modulates signaling in ERK, Src and NF-kappa-B pathways. In activated T-cells, influences directly or indirectly the Ras/MAPK pathway. Promotes tumor progression. Regulates P53-mediated transcription and determines cell fate in the genotoxic stress response. Binds, together with KLF4, the PE21 promoter element of P53 and represses P53 activity. This chain is Mucin-1 (MUC1), found in Bos taurus (Bovine).